The sequence spans 98 residues: Integration host factor subunit alpha (98 aa).

Positions 49-71 (FGNFDLRDKNQRPGRNPKTGEDI) are disordered.

Belongs to the bacterial histone-like protein family. Heterodimer of an alpha and a beta chain.

Functionally, this protein is one of the two subunits of integration host factor, a specific DNA-binding protein that functions in genetic recombination as well as in transcriptional and translational control. The polypeptide is Integration host factor subunit alpha (Pectobacterium atrosepticum (strain SCRI 1043 / ATCC BAA-672) (Erwinia carotovora subsp. atroseptica)).